The following is a 185-amino-acid chain: Crossover junction endodeoxyribonuclease RuvC (185 aa).

Residues Asp7, Glu68, and Asp141 contribute to the active site. Mg(2+) is bound by residues Asp7, Glu68, and Asp141.

This sequence belongs to the RuvC family. As to quaternary structure, homodimer which binds Holliday junction (HJ) DNA. The HJ becomes 2-fold symmetrical on binding to RuvC with unstacked arms; it has a different conformation from HJ DNA in complex with RuvA. In the full resolvosome a probable DNA-RuvA(4)-RuvB(12)-RuvC(2) complex forms which resolves the HJ. The cofactor is Mg(2+).

It localises to the cytoplasm. The enzyme catalyses Endonucleolytic cleavage at a junction such as a reciprocal single-stranded crossover between two homologous DNA duplexes (Holliday junction).. The RuvA-RuvB-RuvC complex processes Holliday junction (HJ) DNA during genetic recombination and DNA repair. Endonuclease that resolves HJ intermediates. Cleaves cruciform DNA by making single-stranded nicks across the HJ at symmetrical positions within the homologous arms, yielding a 5'-phosphate and a 3'-hydroxyl group; requires a central core of homology in the junction. The consensus cleavage sequence is 5'-(A/T)TT(C/G)-3'. Cleavage occurs on the 3'-side of the TT dinucleotide at the point of strand exchange. HJ branch migration catalyzed by RuvA-RuvB allows RuvC to scan DNA until it finds its consensus sequence, where it cleaves and resolves the cruciform DNA. This is Crossover junction endodeoxyribonuclease RuvC from Mycobacterium sp. (strain MCS).